A 291-amino-acid chain; its full sequence is Oligopeptide transport system permease protein OppC (291 aa).

The next 6 helical transmembrane spans lie at 22–42 (VASL…PPLL), 85–105 (MLIG…VGAI), 116–136 (TLMW…IAIV), 142–162 (NSAN…MISS), 209–229 (ALNV…GFGI), and 247–267 (ATAF…ILVC). In terms of domain architecture, ABC transmembrane type-1 spans 81-272 (MQKSMLIGVC…LILVCANLTG (192 aa)).

It belongs to the binding-protein-dependent transport system permease family. OppBC subfamily. In terms of assembly, the complex is composed of an ATP-binding protein (OppD), two transmembrane proteins (OppB and OppC) and a solute-binding protein (OppA).

Its subcellular location is the cell inner membrane. In terms of biological role, part of the ABC transporter complex OppABCD involved in the uptake of oligopeptides. Responsible for the translocation of the substrate across the membrane. This is Oligopeptide transport system permease protein OppC from Mycobacterium bovis (strain ATCC BAA-935 / AF2122/97).